A 313-amino-acid chain; its full sequence is Fucose-specific lectin (313 aa).

6 repeat units span residues 5–57, 58–109, 110–162, 163–208, 209–260, and 261–304. Residues 5–304 form a 6 X approximate tandem repeats region; sequence FLYTSKIAAI…SGKGWSIGAV (300 aa). Beta-L-fucose contacts are provided by arginine 25, glutamate 37, arginine 78, glutamate 90, tryptophan 98, glutamine 102, arginine 132, glutamate 147, and tryptophan 154. Alpha-L-fucose contacts are provided by arginine 78 and glutamate 90. Glutamine 102 contacts alpha-L-fucose. Positions 154, 180, and 192 each coordinate alpha-L-fucose. Tryptophan 200 provides a ligand contact to beta-L-fucose. Residue glycine 204 coordinates alpha-L-fucose. Positions 227 and 239 each coordinate beta-L-fucose. Alpha-L-fucose is bound at residue tryptophan 246. Residue tryptophan 299 coordinates beta-L-fucose.

This sequence belongs to the fungal fucose-specific lectin family. Forms homodimers. The two AAL monomers are associated via interactions between N-terminal and C-terminal peptides. Tyr-7 interacts via aromatic ring stacking with its counterpart on the other monomer, whereas Ser-284 interacts via hydrogen bonding with Asp-264 on the other monomer.

Functionally, lectin that specifically binds to L-fucose. Has strongest preference for the alpha-1,6-fucosylated chain (core fucose) on glycoproteins among alpha-1,2-, alpha-1,3-, alpha-1,4-, and alpha-1,6-fucosylated chains. Might play a role in the differentiation of the fruiting body. Exhibits antifungal activity against Mucor racemosus and thus could act as an antifungal protein in natural ecosystems. This is Fucose-specific lectin from Aleuria aurantia (Orange peel mushroom).